A 91-amino-acid chain; its full sequence is Acylphosphatase (91 aa).

Positions 3 to 90 constitute an Acylphosphatase-like domain; it reads RVLIRVKGKV…EIYLDFSITQ (88 aa). Active-site residues include Arg-18 and Asn-36.

It belongs to the acylphosphatase family.

The catalysed reaction is an acyl phosphate + H2O = a carboxylate + phosphate + H(+). The sequence is that of Acylphosphatase (acyP) from Shewanella amazonensis (strain ATCC BAA-1098 / SB2B).